Reading from the N-terminus, the 535-residue chain is uncharacterized protein (535 aa).

Disordered regions lie at residues 1-58 (MSMK…PRGP), 211-254 (EPPK…PPCI), 313-353 (RRVA…EQVK), 376-416 (RPDK…DQRL), 421-440 (QGLD…DAAW), and 508-535 (SLFE…SRRD). Positions 22 to 34 (IRRDPWFGGRDNE) are enriched in basic and acidic residues. The interval 179–342 (AQYIRYTPSQ…KARQERSAMR (164 aa)) is SNW. Positions 376–393 (RPDKADKLRKERERDISE) are enriched in basic and acidic residues. Residues 511–535 (EHTKEKKRGGDGGDSRGESKRSRRD) show a composition bias toward basic and acidic residues.

This sequence belongs to the SNW family.

This is an uncharacterized protein from Caenorhabditis elegans.